Reading from the N-terminus, the 66-residue chain is Large ribosomal subunit protein bL35 (66 aa).

Composition is skewed to basic residues over residues 1–15 (MPKL…KRFK) and 27–40 (AGKR…TKKQ). Residues 1–40 (MPKLKTKSGAKKRFKVTGTGKVMSAHAGKRHGMIKRTKKQ) are disordered.

Belongs to the bacterial ribosomal protein bL35 family.

The protein is Large ribosomal subunit protein bL35 of Rhodopseudomonas palustris (strain BisA53).